Consider the following 121-residue polypeptide: Small ribosomal subunit protein uS10 (121 aa).

At serine 2 the chain carries N-acetylserine. Glycyl lysine isopeptide (Lys-Gly) (interchain with G-Cter in ubiquitin) cross-links involve residues lysine 6, lysine 8, lysine 21, lysine 32, and lysine 101.

Belongs to the universal ribosomal protein uS10 family. In terms of assembly, component of the small ribosomal subunit (SSU). Mature yeast ribosomes consist of a small (40S) and a large (60S) subunit. The 40S small subunit contains 1 molecule of ribosomal RNA (18S rRNA) and 33 different proteins (encoded by 57 genes). The large 60S subunit contains 3 rRNA molecules (25S, 5.8S and 5S rRNA) and 46 different proteins (encoded by 81 genes). Ubiquitinated at Lys-6 and Lys-8 by HEL2, to activate the ribosome quality control (RQC) pathway in response to stalled ribosomes. In terms of processing, N-terminally acetylated by acetyltransferase NatA. Also partially acetylated by NatC.

The protein resides in the cytoplasm. Functionally, component of the ribosome, a large ribonucleoprotein complex responsible for the synthesis of proteins in the cell. The small ribosomal subunit (SSU) binds messenger RNAs (mRNAs) and translates the encoded message by selecting cognate aminoacyl-transfer RNA (tRNA) molecules. The large subunit (LSU) contains the ribosomal catalytic site termed the peptidyl transferase center (PTC), which catalyzes the formation of peptide bonds, thereby polymerizing the amino acids delivered by tRNAs into a polypeptide chain. The nascent polypeptides leave the ribosome through a tunnel in the LSU and interact with protein factors that function in enzymatic processing, targeting, and the membrane insertion of nascent chains at the exit of the ribosomal tunnel. The sequence is that of Small ribosomal subunit protein uS10 from Saccharomyces cerevisiae (strain ATCC 204508 / S288c) (Baker's yeast).